Consider the following 228-residue polypeptide: 3-dehydroquinate dehydratase (228 aa).

3-dehydroquinate-binding positions include S26, 51–53 (EIR), and R84. H127 acts as the Proton donor/acceptor in catalysis. K150 acts as the Schiff-base intermediate with substrate in catalysis. Residues R190, T209, and Q213 each contribute to the 3-dehydroquinate site.

This sequence belongs to the type-I 3-dehydroquinase family. Homodimer.

It carries out the reaction 3-dehydroquinate = 3-dehydroshikimate + H2O. It functions in the pathway metabolic intermediate biosynthesis; chorismate biosynthesis; chorismate from D-erythrose 4-phosphate and phosphoenolpyruvate: step 3/7. In terms of biological role, involved in the third step of the chorismate pathway, which leads to the biosynthesis of aromatic amino acids. Catalyzes the cis-dehydration of 3-dehydroquinate (DHQ) and introduces the first double bond of the aromatic ring to yield 3-dehydroshikimate. This is 3-dehydroquinate dehydratase from Thermoplasma acidophilum (strain ATCC 25905 / DSM 1728 / JCM 9062 / NBRC 15155 / AMRC-C165).